The chain runs to 436 residues: Histidine--tRNA ligase (436 aa).

Belongs to the class-II aminoacyl-tRNA synthetase family.

Its subcellular location is the cytoplasm. The catalysed reaction is tRNA(His) + L-histidine + ATP = L-histidyl-tRNA(His) + AMP + diphosphate + H(+). This Thermococcus kodakarensis (strain ATCC BAA-918 / JCM 12380 / KOD1) (Pyrococcus kodakaraensis (strain KOD1)) protein is Histidine--tRNA ligase.